Consider the following 179-residue polypeptide: Crossover junction endodeoxyribonuclease RuvC (179 aa).

Active-site residues include Asp-7 and Glu-67. Mn(2+)-binding residues include Asp-7 and Glu-67. Positions 68–74 (DQILRRQ) match the DNA-binding loop motif. Catalysis depends on residues His-139 and Asp-142. His-139 provides a ligand contact to Mn(2+).

The protein belongs to the RuvC family. Homodimer which binds Holliday junction (HJ) DNA. The HJ becomes 2-fold symmetrical on binding to RuvC with unstacked arms; it has a different conformation from HJ DNA in complex with RuvA. In the full resolvosome a probable DNA-RuvA(4)-RuvB(12)-RuvC(2) complex forms which resolves the HJ. Mn(2+) serves as cofactor.

It localises to the cytoplasm. The catalysed reaction is Endonucleolytic cleavage at a junction such as a reciprocal single-stranded crossover between two homologous DNA duplexes (Holliday junction).. In terms of biological role, the RuvA-RuvB-RuvC complex processes Holliday junction (HJ) DNA during genetic recombination and DNA repair. Endonuclease that resolves HJ intermediates. Cleaves cruciform DNA by making single-stranded nicks across the HJ at symmetrical positions within the homologous arms, probably yielding a 5'-phosphate and a 3'-hydroxyl group; requires a central core of homology in the junction. The consensus cleavage sequence is 5'-(G/C)TC(C/G)-3' (a different site than E.coli); cleavage occurs on the 3'-side of the TC dinucleotide at the point of strand exchange. Also resolves nicked HJ intermediates, replication forks and Y-junction DNA in vitro. HJ branch migration catalyzed by RuvA-RuvB allows RuvC to scan DNA until it finds its consensus sequence, where it cleaves and resolves the cruciform DNA. Binds HJ DNA independently of homologous core or consensus sequence; Mn(2+) is not essential for binding but improves it, while &gt;1.0 mM Mg(2+) inhibit binding. Also binds Y-junction DNA less well. Requires a homologous core to cleave DNA. Another study shows divalent cations (Mn(2+), Mg(2+) and Ca(2+), tested up to 5.0 mM) improve DNA binding considerably over binding in their absence. This chain is Crossover junction endodeoxyribonuclease RuvC, found in Deinococcus radiodurans (strain ATCC 13939 / DSM 20539 / JCM 16871 / CCUG 27074 / LMG 4051 / NBRC 15346 / NCIMB 9279 / VKM B-1422 / R1).